The following is a 135-amino-acid chain: Large ribosomal subunit protein uL16c (135 aa).

The residue at position 1 (M1) is an N-methylmethionine.

In terms of assembly, component of the chloroplast large ribosomal subunit (LSU). Mature 70S chloroplast ribosomes of higher plants consist of a small (30S) and a large (50S) subunit. The 30S small subunit contains 1 molecule of ribosomal RNA (16S rRNA) and 24 different proteins. The 50S large subunit contains 3 rRNA molecules (23S, 5S and 4.5S rRNA) and 33 different proteins. Partially alpha-N-monomethylated at Met-1 (10%), whereas 90% of it is blocked to Edman degradation, probably by trimethylation.

Its subcellular location is the plastid. It localises to the chloroplast. In terms of biological role, component of the chloroplast ribosome (chloro-ribosome), a dedicated translation machinery responsible for the synthesis of chloroplast genome-encoded proteins, including proteins of the transcription and translation machinery and components of the photosynthetic apparatus. The chain is Large ribosomal subunit protein uL16c from Spinacia oleracea (Spinach).